We begin with the raw amino-acid sequence, 333 residues long: Transcription initiation factor IIB (333 aa).

The TFIIB-type zinc-finger motif lies at 33 to 64 (EVYRCPICGNDRFVYNYERGEIVCIVCGAVVQ). Residues C37, C40, C56, and C59 each contribute to the Zn(2+) site. 2 consecutive repeat copies span residues 149 to 232 (QELE…LREL) and 243 to 324 (LYIS…ELAK).

This sequence belongs to the TFIIB family.

Functionally, stabilizes TBP binding to an archaeal box-A promoter. Also responsible for recruiting RNA polymerase II to the pre-initiation complex (DNA-TBP-TFIIB). The protein is Transcription initiation factor IIB of Pyrobaculum islandicum (strain DSM 4184 / JCM 9189 / GEO3).